Here is a 423-residue protein sequence, read N- to C-terminus: Imidazolonepropionase (423 aa).

2 residues coordinate Fe(3+): histidine 78 and histidine 80. Residues histidine 78 and histidine 80 each coordinate Zn(2+). Positions 87, 150, and 183 each coordinate 4-imidazolone-5-propanoate. Residue tyrosine 150 participates in N-formimidoyl-L-glutamate binding. Residue histidine 247 coordinates Fe(3+). Zn(2+) is bound at residue histidine 247. Glutamate 250 lines the 4-imidazolone-5-propanoate pocket. Aspartate 322 is a Fe(3+) binding site. Aspartate 322 is a Zn(2+) binding site. N-formimidoyl-L-glutamate is bound by residues asparagine 324 and glycine 326. Position 327 (serine 327) interacts with 4-imidazolone-5-propanoate.

The protein belongs to the metallo-dependent hydrolases superfamily. HutI family. Requires Zn(2+) as cofactor. Fe(3+) is required as a cofactor.

It localises to the cytoplasm. It catalyses the reaction 4-imidazolone-5-propanoate + H2O = N-formimidoyl-L-glutamate. The protein operates within amino-acid degradation; L-histidine degradation into L-glutamate; N-formimidoyl-L-glutamate from L-histidine: step 3/3. Catalyzes the hydrolytic cleavage of the carbon-nitrogen bond in imidazolone-5-propanoate to yield N-formimidoyl-L-glutamate. It is the third step in the universal histidine degradation pathway. The sequence is that of Imidazolonepropionase from Bacillus cereus (strain G9842).